The sequence spans 505 residues: Probable cytochrome P450 28a5 (505 aa).

Cysteine 450 contributes to the heme binding site.

Belongs to the cytochrome P450 family. Requires heme as cofactor.

The protein resides in the endoplasmic reticulum membrane. The protein localises to the microsome membrane. Functionally, may be involved in the metabolism of insect hormones and in the breakdown of synthetic insecticides. The polypeptide is Probable cytochrome P450 28a5 (Cyp28a5) (Drosophila melanogaster (Fruit fly)).